The sequence spans 107 residues: uncharacterized protein (107 aa).

The first 18 residues, 1–18 (MRTLMLIILSILIYLSSA), serve as a signal peptide directing secretion.

This is an uncharacterized protein from Caenorhabditis elegans.